Reading from the N-terminus, the 964-residue chain is Phosphoenolpyruvate carboxylase (964 aa).

Serine 11 is subject to Phosphoserine. Catalysis depends on residues histidine 172 and lysine 600.

The protein belongs to the PEPCase type 1 family. As to quaternary structure, homotetramer. The cofactor is Mg(2+).

Its subcellular location is the cytoplasm. The catalysed reaction is oxaloacetate + phosphate = phosphoenolpyruvate + hydrogencarbonate. Its pathway is photosynthesis; C4 acid pathway. By light-reversible phosphorylation. In terms of biological role, through the carboxylation of phosphoenolpyruvate (PEP) it forms oxaloacetate, a four-carbon dicarboxylic acid source for the tricarboxylic acid cycle. This chain is Phosphoenolpyruvate carboxylase, found in Amaranthus hypochondriacus (Prince-of-Wales feather).